Consider the following 3432-residue polypeptide: Hybrid signal transduction histidine kinase G (3432 aa).

Low complexity-rich tracts occupy residues 44 to 68, 76 to 90, and 126 to 145; these read HFSNSVLNQTTTTTTTTTTTTTTTN, SQLQAQLQSQSQQNN, and QPQQQQQQQASNKSKLSQKQ. Disordered stretches follow at residues 44–109 and 124–240; these read HFSN…TNSS and DDQP…HNIN. A compositionally biased stretch (polar residues) spans 146–157; it reads TSQLNISGNNSG. Low complexity-rich tracts occupy residues 165–177 and 187–238; these read TISNSNNSINFIH and KTPI…NNHN. Residues 263 to 792 enclose the Protein kinase domain; sequence LSFKHGYNSG…YGLKKDLEMF (530 aa). ATP-binding positions include 269–277 and lysine 305; that span reads YNSGLGGNF. Low complexity predominate over residues 399-419; the sequence is NNNNNNNNSYNNNYNNNNNNN. Disordered stretches follow at residues 399–426 and 443–542; these read NNNNNNNNSYNNNYNNNNNNNGQVTSPI and FQLN…STPL. Polar residues predominate over residues 443 to 467; the sequence is FQLNSSTNSTGSPLIITSQPMPFQL. A compositionally biased stretch (low complexity) spans 468 to 479; sequence NSNSNTTASSSS. A compositionally biased stretch (polar residues) spans 480-490; that stretch reads PITHSNLNTAI. Residues 491–508 show a composition bias toward low complexity; that stretch reads TSTTTSNSNSNNNSNNNN. Positions 509–525 are enriched in gly residues; sequence SGGGGGGGGGGGGGGGT. Residue aspartate 585 is the Proton acceptor; for protein kinase activity of the active site. The interval 863–1121 is AAA; that stretch reads GKEFIIVSGL…TMKIVLKNLD (259 aa). 871 to 878 is a binding site for ATP; it reads GLSGVGKT. Disordered regions lie at residues 1040-1077 and 1261-1290; these read NNFSINNNNNNNNGCNNNNNNNNNNINNNNNNNNNNNI and TTTTNNNTTNNTNNNNTNNNNNNTNGNNSD. Positions 1261–1288 are enriched in low complexity; the sequence is TTTTNNNTTNNTNNNNTNNNNNNTNGNN. The next 2 membrane-spanning stretches (helical) occupy residues 1567-1587 and 1599-1619; these read VMVIMMPSLYLNNLNVLTLLL and ISSWSSTAFAMFGMVVSIGHF. Residues 1965–1998 form a TPR repeat; that stretch reads SQLMLAKAEFERINGNFEQAMEYFSEAISLAQQF. Disordered regions lie at residues 2071 to 2095 and 2299 to 2349; these read EYSNNNNNNNSNNNNNNANQSQASI and GYNN…NNNK. Positions 2073 to 2095 are enriched in low complexity; that stretch reads SNNNNNNNSNNNNNNANQSQASI. A GAF domain is found at 2215 to 2465; the sequence is YFDRLLKRLM…SNARLFIKVN (251 aa). The region spanning 2491–2769 is the Histidine kinase domain; that stretch reads NMSHEMRTPL…TFHFCVELGK (279 aa). Histidine 2494 is subject to Phosphohistidine; by autocatalysis. The segment covering 2637-2648 has biased composition (low complexity); that stretch reads TTTNNKKQLNTD. Disordered regions lie at residues 2637–2673, 2785–2815, 2917–3030, 3134–3160, and 3247–3281; these read TTTNNKKQLNTDNDGDDDDDDDNENLDENNEDTSIDL, LLNNNNNNNNNNNNNNNNNNNNNNNNNNNNN, LSPK…NNNS, NNNINNINNNNNKSNSPIPEDSKHSQY, and NSISTTSHSSTSTSSSSSSSSSSSSSLSSTTTITT. Residues 2649 to 2673 show a composition bias toward acidic residues; the sequence is NDGDDDDDDDNENLDENNEDTSIDL. 3 stretches are compositionally biased toward low complexity: residues 2787 to 2815, 2935 to 3029, and 3134 to 3145; these read NNNNNNNNNNNNNNNNNNNNNNNNNNNNN, LSSS…HNNN, and NNNINNINNNNN. The Response regulatory domain maps to 3305-3424; sequence KILIVEDNEM…DLRYVINRYG (120 aa). At aspartate 3356 the chain carries 4-aspartylphosphate.

This sequence belongs to the protein kinase superfamily. Ser/Thr protein kinase family. Activation probably requires transfer of a phosphate group between a histidine in the kinase core (transmitter) domain and an aspartate of the receiver domain.

The protein localises to the membrane. It carries out the reaction ATP + protein L-histidine = ADP + protein N-phospho-L-histidine.. The catalysed reaction is L-seryl-[protein] + ATP = O-phospho-L-seryl-[protein] + ADP + H(+). It catalyses the reaction L-threonyl-[protein] + ATP = O-phospho-L-threonyl-[protein] + ADP + H(+). Acts as a receptor histidine kinase for a signal transduction pathway. This protein undergoes an ATP-dependent autophosphorylation at a conserved histidine residue in the kinase core, and a phosphoryl group is then transferred to a conserved aspartate residue in the receiver domain. The chain is Hybrid signal transduction histidine kinase G (dhkG) from Dictyostelium discoideum (Social amoeba).